A 1035-amino-acid polypeptide reads, in one-letter code: Beta-galactosidase (1035 aa).

2 residues coordinate substrate: N101 and D199. D199 serves as a coordination point for Na(+). Mg(2+) contacts are provided by E415, H417, and E460. Substrate is bound by residues E460 and 540-543 (EYAH). The Proton donor role is filled by E460. The active-site Nucleophile is E540. N600 provides a ligand contact to Mg(2+). F604 and N607 together coordinate Na(+). Positions 607 and 1011 each coordinate substrate.

The protein belongs to the glycosyl hydrolase 2 family. Homotetramer. Mg(2+) is required as a cofactor. It depends on Na(+) as a cofactor.

The catalysed reaction is Hydrolysis of terminal non-reducing beta-D-galactose residues in beta-D-galactosides.. The sequence is that of Beta-galactosidase from Psychromonas ingrahamii (strain DSM 17664 / CCUG 51855 / 37).